A 738-amino-acid polypeptide reads, in one-letter code: Alanine--tRNA ligase (738 aa).

H564, H568, C666, and H670 together coordinate Zn(2+).

It belongs to the class-II aminoacyl-tRNA synthetase family. As to quaternary structure, homotetramer. The cofactor is Zn(2+).

The protein resides in the cytoplasm. The enzyme catalyses tRNA(Ala) + L-alanine + ATP = L-alanyl-tRNA(Ala) + AMP + diphosphate. Functionally, catalyzes the attachment of alanine to tRNA(Ala) in a two-step reaction: alanine is first activated by ATP to form Ala-AMP and then transferred to the acceptor end of tRNA(Ala). Also edits incorrectly charged Ser-tRNA(Ala) and Gly-tRNA(Ala) via its editing domain. This chain is Alanine--tRNA ligase (alaS), found in Yersinia pestis bv. Antiqua (strain Antiqua).